The sequence spans 466 residues: Glutamate--tRNA ligase (466 aa).

A 'HIGH' region motif is present at residues 9–19; sequence PSPTGDLHVGS. Residues 237–241 carry the 'KMSKS' region motif; the sequence is KLSKR. Lys-240 serves as a coordination point for ATP.

This sequence belongs to the class-I aminoacyl-tRNA synthetase family. Glutamate--tRNA ligase type 1 subfamily. In terms of assembly, monomer.

It localises to the cytoplasm. The catalysed reaction is tRNA(Glu) + L-glutamate + ATP = L-glutamyl-tRNA(Glu) + AMP + diphosphate. Catalyzes the attachment of glutamate to tRNA(Glu) in a two-step reaction: glutamate is first activated by ATP to form Glu-AMP and then transferred to the acceptor end of tRNA(Glu). This chain is Glutamate--tRNA ligase, found in Baumannia cicadellinicola subsp. Homalodisca coagulata.